We begin with the raw amino-acid sequence, 336 residues long: Tetraacyldisaccharide 4'-kinase (336 aa).

60–67 (TIGGTGKT) is a binding site for ATP.

Belongs to the LpxK family.

It catalyses the reaction a lipid A disaccharide + ATP = a lipid IVA + ADP + H(+). Its pathway is glycolipid biosynthesis; lipid IV(A) biosynthesis; lipid IV(A) from (3R)-3-hydroxytetradecanoyl-[acyl-carrier-protein] and UDP-N-acetyl-alpha-D-glucosamine: step 6/6. Its function is as follows. Transfers the gamma-phosphate of ATP to the 4'-position of a tetraacyldisaccharide 1-phosphate intermediate (termed DS-1-P) to form tetraacyldisaccharide 1,4'-bis-phosphate (lipid IVA). This is Tetraacyldisaccharide 4'-kinase from Pseudomonas putida (strain W619).